The following is a 142-amino-acid chain: UPF0336 protein PPA1896 (142 aa).

The protein belongs to the UPF0336 family.

This is UPF0336 protein PPA1896 from Cutibacterium acnes (strain DSM 16379 / KPA171202) (Propionibacterium acnes).